The primary structure comprises 689 residues: MATKTAGVGRWEVVKKGRRPGVGAGAGGRGGGRNRRALGEANGVWKYDLTPAIQTTSTLYERGFENIMKRQNKEQVPPPAVEPKKPGNKKQPKKVATPPNQNQKQGRFRSLEEALKALDVADLQKELDKSQSVFSGNPSIWLKDLASYLNYKLQAPLSEPTLSQHTHDYPYSLVSRELRGIIRGLLAKAAGSLELFFDHCLFTMLQELDKTPGESLHGYRICIQAILQDKPKIATANLGKFLELLRSHQSRPAKCLTIMWALGQAGFANLTEGLKVWLGIMLPVLGIKSLSPFAITYLDRLLLMHPNLTKGFGMIGPKDFFPLLDFAYMPNNSLTPSLQEQLCQLYPRLKVLAFGAKPDSTLHTYFPSFLSRATPSCPPEMKKELLSSLTECLTVDPLSASVWRQLYPKHLSQSSLLLEHLLSSWEQIPKKVQKSLQETIQSLKLTNQELLRKGSSNNQDVVTCDMACKGLLQQVQGPRLPWTRLLLLLLVFAVGFLCHDLRSHSSFQASLTGRLLRSSGFLPASQQACAKLYSYSLQGYSWLGETLPLWGSHLLTVVRPSLQLAWAHTNATVSFLSAHCASHLAWFGDSLTSLSQRLQIQLPDSVNQLLRYLRELPLLFHQNVLLPLWHLLLEALAWAQEHCHEACRGEVTWDCMKTQLSEAVHWTWLCLQDITVAFLDWALALISQQ.

Disordered regions lie at residues 1-37 (MATK…NRRA) and 70-107 (RQNK…KQGR). Alanine 2 is modified (N-acetylalanine). Positions 20–31 (PGVGAGAGGRGG) are enriched in gly residues. 2 N-linked (GlcNAc...) asparagine glycosylation sites follow: asparagine 269 and asparagine 307. 2 helical membrane passes run 480-500 (LPWT…LCHD) and 616-636 (LPLL…LEAL).

The protein belongs to the TMEM214 family. As to quaternary structure, constitutively interacts with CASP4; required for the localization of procaspase 4 to the ER.

It localises to the endoplasmic reticulum membrane. Its function is as follows. Critical mediator, in cooperation with CASP4, of endoplasmic reticulum-stress induced apoptosis. Required or the activation of CASP4 following endoplasmic reticulum stress. This chain is Transmembrane protein 214 (TMEM214), found in Homo sapiens (Human).